Here is a 362-residue protein sequence, read N- to C-terminus: RNA-binding protein 48 (362 aa).

The region spanning 46–124 is the RRM domain; that stretch reads WYLLIQGVPA…GLLHVCYAPE (79 aa). A disordered region spans residues 334 to 362; it reads EVISSVPKPPEDKVEDVHRSRPLKQRRRI. The span at 342-352 shows a compositional bias: basic and acidic residues; it reads PPEDKVEDVHR. The segment covering 353 to 362 has biased composition (basic residues); it reads SRPLKQRRRI.

Belongs to the RBM48 family. In terms of assembly, component of the minor spliceosome. Within this complex, interacts with ARMC7 and PRPF8/PRP8.

As a component of the minor spliceosome, involved in the splicing of U12-type introns in pre-mRNAs. In Bos taurus (Bovine), this protein is RNA-binding protein 48 (RBM48).